A 273-amino-acid polypeptide reads, in one-letter code: Ribosomal RNA small subunit methyltransferase A (273 aa).

The S-adenosyl-L-methionine site is built by N18, L20, G45, E66, D91, and N113.

The protein belongs to the class I-like SAM-binding methyltransferase superfamily. rRNA adenine N(6)-methyltransferase family. RsmA subfamily.

It is found in the cytoplasm. The catalysed reaction is adenosine(1518)/adenosine(1519) in 16S rRNA + 4 S-adenosyl-L-methionine = N(6)-dimethyladenosine(1518)/N(6)-dimethyladenosine(1519) in 16S rRNA + 4 S-adenosyl-L-homocysteine + 4 H(+). In terms of biological role, specifically dimethylates two adjacent adenosines (A1518 and A1519) in the loop of a conserved hairpin near the 3'-end of 16S rRNA in the 30S particle. May play a critical role in biogenesis of 30S subunits. In Erwinia tasmaniensis (strain DSM 17950 / CFBP 7177 / CIP 109463 / NCPPB 4357 / Et1/99), this protein is Ribosomal RNA small subunit methyltransferase A.